The following is a 237-amino-acid chain: Ribosomal RNA small subunit methyltransferase G (237 aa).

S-adenosyl-L-methionine is bound by residues G78, F83, 129 to 130 (AE), and R148. A disordered region spans residues 216 to 237 (SKKKETPNKYPRKAGTPNKKPL).

This sequence belongs to the methyltransferase superfamily. RNA methyltransferase RsmG family.

The protein localises to the cytoplasm. Functionally, specifically methylates the N7 position of a guanine in 16S rRNA. The sequence is that of Ribosomal RNA small subunit methyltransferase G from Streptococcus agalactiae serotype III (strain NEM316).